Reading from the N-terminus, the 205-residue chain is Thymidylate kinase (205 aa).

7 to 14 (GIDGSGKT) contributes to the ATP binding site.

It belongs to the thymidylate kinase family.

It catalyses the reaction dTMP + ATP = dTDP + ADP. In terms of biological role, phosphorylation of dTMP to form dTDP in both de novo and salvage pathways of dTTP synthesis. The chain is Thymidylate kinase from Wolbachia pipientis subsp. Culex pipiens (strain wPip).